The sequence spans 378 residues: Stimulator of interferon genes protein (378 aa).

At 1–17 (MPHSSLHPSIPQPRGLR) the chain is on the cytoplasmic side. Residues 1–190 (MPHSSLHPSI…IYNQFHNNTL (190 aa)) are mediates interaction with ZDHHC1 and ZDHHC11. A helical transmembrane segment spans residues 18-34 (AQKAALVLLSACLVALW). The Lumenal portion of the chain corresponds to 35-44 (GLGEPPDYTL). Residues 45-69 (KWLVLHLASQQMGLLIKGICSLAEE) form a helical membrane-spanning segment. The Cytoplasmic segment spans residues 70 to 91 (LCHVHSRYHGSYWRAVRACLCS). C88 carries S-palmitoyl cysteine lipidation. Residues 92-106 (SMRCGALLLLSCYFY) form a helical membrane-spanning segment. The Lumenal portion of the chain corresponds to 107–116 (CSLPNMADLP). The chain crosses the membrane as a helical span at residues 117 to 134 (FTWMLALLGLSQALNILL). Residues 135–378 (GLQGLAPAEV…KPLPLRSDVF (244 aa)) lie on the Cytoplasmic side of the membrane. K150 participates in a covalent cross-link: Glycyl lysine isopeptide (Lys-Gly) (interchain with G-Cter in ubiquitin). The interval 153 to 339 (FNVAHGLAWS…LQHLRQEERE (187 aa)) is cyclic dinucleotide-binding domain (CBD). 2 residues coordinate 2',3'-cGAMP: S162 and Y167. 2 residues coordinate 3',3'-c-di-GMP: S162 and Y167. A 2',3'-cUAMP-binding site is contributed by Y167. K236 is covalently cross-linked (Glycyl lysine isopeptide (Lys-Gly) (interchain with G-Cter in ubiquitin)). 2 residues coordinate 2',3'-cGAMP: R238 and T263. 2',3'-cUAMP contacts are provided by R238 and T263. Residues 238–241 (RVYT) and T263 contribute to the 3',3'-c-di-GMP site. The tract at residues 339-378 (EVTMGSTETSVMPGSSVLSQEPELLISGLEKPLPLRSDVF) is C-terminal tail (CTT). Position 354 is a phosphoserine (S354). Phosphoserine; by TBK1 occurs at positions 357 and 365. The short motif at 362–365 (LLIS) is the pLxIS motif element.

The protein belongs to the STING family. Homodimer; forms a homodimer in absence of cyclic nucleotide (c-di-GMP or cGAMP); 'Lys-63'-linked ubiquitination at Lys-150 is required for homodimerization. Homotetramer; in presence of cyclic nucleotide (c-di-GMP or cGAMP), forms tetramers and higher-order oligomers through side-by-side packing. Interacts (when phosphorylated) with IRF3; following activation and phosphorylation on the pLxIS motif by TBK1, recruits IRF3. Interacts with RIGI, MAVS and SSR2. Interacts with RNF5 and TRIM56. Interacts with TBK1; when homodimer, leading to subsequent production of IFN-beta. Interacts with IFIT1 and IFIT2. Interacts with TRIM29; this interaction induces STING1 ubiquitination and subsequent degradation. Associates with the MHC-II complex. Interacts with STEEP1; interaction takes place upon cGAMP-activation and STING1 phosphorylation by MAP3K7/TAK1 and promotes STING1 translocation to COPII vesicles. Interacts with SEC24A, SEC24B and SEC24C; promoting translocation to COPII vesicles. Interacts (when ubiquitinated) with SQSTM1; leading to relocalization to autophagosomes. Interacts with SURF4. Interacts with HNRNPA2B1. Interacts with ZDHHC1; ZDHHC1 constitutively interacts with STING1 and in presence of DNA viruses activates it by promoting its cGAMP-induced oligomerization and the recruitment of downstream signaling components. Interacts with ZDHHC11; in presence of DNA viruses promotes the recruitment of IRF3 to STING1. Interacts with TOMM70. Interacts with TAB1; promoting recruitment of TAB1 to the endoplasmic reticulum membrane and subsequent activation of MAP3K7/TAK1. Interacts (via transmembrane domain) with TMEM203. Interacts with DDX41. Phosphorylation by TBK1 leads to activation and production of IFN-beta. Following cyclic nucleotide (c-di-GMP or cGAMP)-binding, activation and translocation from the endoplasmic reticulum, STING1 is phosphorylated by TBK1 at Ser-365 in the pLxIS motif. The phosphorylated pLxIS motif constitutes an IRF3-binding motif, leading to recruitment of the transcription factor IRF3 to induce type-I interferons and other cytokines. Phosphorylated on tyrosine residues upon MHC-II aggregation. Dephosphorylation by PPP6C leads to inactivation and decreased production of IFN-beta. Phosphorylation at Ser-357 is also required to activate IRF3. Phosphorylation at Ser-354 by MAP3K7/TAK1 facilitates its interaction with STEEP1, promoting STING1 translocation to COPII vesicles. In terms of processing, ubiquitinated. Ubiquitinated via 'Lys-63'-linked ubiquitin chains in response to double-stranded DNA treatment, leading to relocalization to autophagosomes and subsequent degradation; this process is dependent on SQSTM1. 'Lys-63'-linked ubiquitination mediated by TRIM56 at Lys-150 promotes homodimerization and recruitment of the antiviral kinase TBK1 and subsequent production of IFN-beta. 'Lys-48'-linked polyubiquitination at Lys-150 occurring after viral infection is mediated by RNF5 and leads to proteasomal degradation. 'Lys-11'-linked polyubiquitination at Lys-150 by RNF26 leads to stabilize STING1: it protects STING1 from RNF5-mediated 'Lys-48'-linked polyubiquitination. 'Lys-33'-linked and 'Lys-48'-linked deubiquitinated by USP20; leading to its stabilization and promotion of innate antiviral response. 'Lys-48'-linked deubiquitinated by USP44; leading to its stabilization and promotion of innate antiviral response. 'Lys-63'-linked deubiquitinated by USP49; leading to inhibition of the subsequent recruitment of TBK1 to the signaling complex. 'Lys-63'-linked ubiquitination mediated by RNF39 promotes the activation of the cGAS-STING pathway. Post-translationally, palmitoylation takes place in the Golgi apparatus and creates a platform for the recruitment of TBK1.

The protein resides in the endoplasmic reticulum membrane. The protein localises to the cytoplasm. It localises to the perinuclear region. Its subcellular location is the endoplasmic reticulum-Golgi intermediate compartment membrane. It is found in the golgi apparatus membrane. The protein resides in the cytoplasmic vesicle. The protein localises to the autophagosome membrane. It localises to the mitochondrion outer membrane. Its subcellular location is the cell membrane. It catalyses the reaction H(+)(in) = H(+)(out). Facilitator of innate immune signaling that acts as a sensor of cytosolic DNA from bacteria and viruses and promotes the production of type I interferon (IFN-alpha and IFN-beta). Innate immune response is triggered in response to non-CpG double-stranded DNA from viruses and bacteria delivered to the cytoplasm. Acts by binding cyclic dinucleotides: recognizes and binds cyclic di-GMP (c-di-GMP), a second messenger produced by bacteria, cyclic UMP-AMP (2',3'-cUAMP), and cyclic GMP-AMP (cGAMP), a messenger produced by CGAS in response to DNA virus in the cytosol. Upon binding to c-di-GMP or cGAMP, STING oligomerizes, translocates from the endoplasmic reticulum and is phosphorylated by TBK1 on the pLxIS motif, leading to recruitment and subsequent activation of the transcription factor IRF3 to induce expression of type I interferon and exert a potent anti-viral state. Exhibits 2',3' phosphodiester linkage-specific ligand recognition: can bind both 2'-3' linked cGAMP (2'-3'-cGAMP) and 3'-3' linked cGAMP but is preferentially activated by 2'-3' linked cGAMP. The preference for 2'-3'-cGAMP, compared to other linkage isomers is probably due to the ligand itself, whichs adopts an organized free-ligand conformation that resembles the STING1-bound conformation and pays low energy costs in changing into the active conformation. In addition to promote the production of type I interferons, plays a direct role in autophagy. Following cGAMP-binding, STING1 buds from the endoplasmic reticulum into COPII vesicles, which then form the endoplasmic reticulum-Golgi intermediate compartment (ERGIC). The ERGIC serves as the membrane source for WIPI2 recruitment and LC3 lipidation, leading to formation of autophagosomes that target cytosolic DNA or DNA viruses for degradation by the lysosome. Promotes autophagy by acting as a proton channel that directs proton efflux from the Golgi to facilitate MAP1LC3B/LC3B lipidation. The autophagy- and interferon-inducing activities can be uncoupled and autophagy induction is independent of TBK1 phosphorylation. Autophagy is also triggered upon infection by bacteria: following c-di-GMP-binding, which is produced by live Gram-positive bacteria, promotes reticulophagy. May be involved in translocon function, the translocon possibly being able to influence the induction of type I interferons. May be involved in transduction of apoptotic signals via its association with the major histocompatibility complex class II (MHC-II). In Bos taurus (Bovine), this protein is Stimulator of interferon genes protein.